The primary structure comprises 282 residues: Formamidopyrimidine-DNA glycosylase (282 aa).

Proline 2 (schiff-base intermediate with DNA) is an active-site residue. Glutamate 3 serves as the catalytic Proton donor. The active-site Proton donor; for beta-elimination activity is lysine 61. DNA-binding residues include histidine 93, arginine 112, and lysine 158. An FPG-type zinc finger spans residues 244 to 278 (DAYGREGEPCRRCGAIMRRDKFMNRSSFYCPRCQP). Arginine 268 serves as the catalytic Proton donor; for delta-elimination activity.

Belongs to the FPG family. Monomer. Zn(2+) serves as cofactor.

The enzyme catalyses Hydrolysis of DNA containing ring-opened 7-methylguanine residues, releasing 2,6-diamino-4-hydroxy-5-(N-methyl)formamidopyrimidine.. The catalysed reaction is 2'-deoxyribonucleotide-(2'-deoxyribose 5'-phosphate)-2'-deoxyribonucleotide-DNA = a 3'-end 2'-deoxyribonucleotide-(2,3-dehydro-2,3-deoxyribose 5'-phosphate)-DNA + a 5'-end 5'-phospho-2'-deoxyribonucleoside-DNA + H(+). Functionally, involved in base excision repair of DNA damaged by oxidation or by mutagenic agents. Acts as a DNA glycosylase that recognizes and removes damaged bases. Has a preference for oxidized purines, such as 7,8-dihydro-8-oxoguanine (8-oxoG). Has AP (apurinic/apyrimidinic) lyase activity and introduces nicks in the DNA strand. Cleaves the DNA backbone by beta-delta elimination to generate a single-strand break at the site of the removed base with both 3'- and 5'-phosphates. In Mycolicibacterium gilvum (strain PYR-GCK) (Mycobacterium gilvum (strain PYR-GCK)), this protein is Formamidopyrimidine-DNA glycosylase.